The sequence spans 134 residues: MNTLRLNIVTPNGSVYEREDVEMAVLQTTAGEMGIMYGHIPTVAALKTGHVKVNFHNGNEFIAVSDGFIEARQHQLSIIVQTAEPASEIDVERAKLAKSRAESHLEEDDDNTDINRAKRALERANNRLRVAELQ.

Basic and acidic residues predominate over residues 94–104 (AKLAKSRAESH). The disordered stretch occupies residues 94-115 (AKLAKSRAESHLEEDDDNTDIN).

This sequence belongs to the ATPase epsilon chain family. As to quaternary structure, F-type ATPases have 2 components, CF(1) - the catalytic core - and CF(0) - the membrane proton channel. CF(1) has five subunits: alpha(3), beta(3), gamma(1), delta(1), epsilon(1). CF(0) has three main subunits: a, b and c.

Its subcellular location is the cell membrane. In terms of biological role, produces ATP from ADP in the presence of a proton gradient across the membrane. This Staphylococcus epidermidis (strain ATCC 35984 / DSM 28319 / BCRC 17069 / CCUG 31568 / BM 3577 / RP62A) protein is ATP synthase epsilon chain.